We begin with the raw amino-acid sequence, 683 residues long: Leucine-rich repeat protein soc-2 homolog (683 aa).

The span at 1 to 19 (MNLCSSGATASTTSLSSTG) shows a compositional bias: low complexity. Disordered stretches follow at residues 1–54 (MNLC…SDVS) and 74–150 (GTDE…IQAD). The span at 26-49 (GVPGGGAEGGGGGGGSGNSGGGGK) shows a compositional bias: gly residues. The segment covering 74–86 (GTDELSNANSPAN) has biased composition (low complexity). Positions 99–117 (QQPTGSNGHSHLHNENNAN) are enriched in polar residues. 20 LRR repeats span residues 164–185 (GIKR…VKEC), 187–208 (HLTE…IGCL), 210–231 (SLRN…LQNC), 233–254 (QLKV…IYRL), 256–277 (SLTT…LRQL), 279–300 (NLTM…IGAL), 302–323 (NLTT…IGNC), 325–346 (NLSA…IGNL), 348–370 (SLVR…KNCK), 371–392 (SMDE…MLAS), 395–416 (GLTT…GPAQ), 419–440 (NVYS…IFSR), 443–464 (GLTK…IGTW), 466–487 (NMVE…IMNL), 489–510 (NLEI…IGNL), 512–533 (RLRI…IGLL), 535–556 (ELQR…IGHL), 558–579 (NLTH…IGSL), 581–603 (SLEN…LALC), and 605–626 (NLKY…IQAG). Gly residues predominate over residues 661-671 (AGGNGGGGAAA). Positions 661-683 (AGGNGGGGAAAAGGSASRSSDRR) are disordered. Residues 672 to 683 (AGGSASRSSDRR) show a composition bias toward low complexity.

This sequence belongs to the SHOC2 family.

Its function is as follows. Acts as a Ras effector and participates in MAPK pathway activation. Probably acts as a regulatory subunit of protein phosphatase that specifically dephosphorylates Raf kinase and stimulate Raf activity at specialized signaling complexes upon Ras activation. The polypeptide is Leucine-rich repeat protein soc-2 homolog (Sur-8) (Drosophila sechellia (Fruit fly)).